A 54-amino-acid chain; its full sequence is Zinc-containing ferredoxin A (54 aa).

A disordered region spans residues 1 to 21; sequence GIDPNYRTSRPEVGTHEGHKV. Residues 1 to 36 are N-terminal extension; it reads GIDPNYRTSRPEVGTHEGHKVYGPVENPKVLGIHGA. The span at 9-20 shows a compositional bias: basic and acidic residues; sequence SRPEVGTHEGHK. The Zn(2+) site is built by His-16 and His-19. Lys-29 carries the N6-methyllysine modification. His-34 is a Zn(2+) binding site. The 4Fe-4S ferredoxin-type 1 domain occupies 35–54; the sequence is GAIVGVDFDLCIADGSCINA. [3Fe-4S] cluster contacts are provided by Cys-45 and Cys-51.

[3Fe-4S] cluster is required as a cofactor. Requires [4Fe-4S] cluster as cofactor. It depends on Zn(2+) as a cofactor.

Its function is as follows. Ferredoxins are iron-sulfur proteins that transfer electrons in a wide variety of metabolic reactions. The polypeptide is Zinc-containing ferredoxin A (zfx) (Sulfuracidifex metallicus (Sulfolobus metallicus)).